The chain runs to 466 residues: Uronate isomerase (466 aa).

The protein belongs to the metallo-dependent hydrolases superfamily. Uronate isomerase family.

The enzyme catalyses D-glucuronate = D-fructuronate. It catalyses the reaction aldehydo-D-galacturonate = keto-D-tagaturonate. It participates in carbohydrate metabolism; pentose and glucuronate interconversion. This Streptococcus pneumoniae (strain 70585) protein is Uronate isomerase.